A 397-amino-acid chain; its full sequence is 3-ketoacyl-CoA thiolase, mitochondrial (397 aa).

Residues 1–16 (MALLRGVFVVAAKRTP) constitute a mitochondrion; not cleaved transit peptide. An N6-acetyllysine; alternate modification is found at Lys25. Position 25 is an N6-succinyllysine; alternate (Lys25). Position 45 is an N6-succinyllysine (Lys45). Cys92 functions as the Acyl-thioester intermediate in the catalytic mechanism. Thr119 bears the Phosphothreonine mark. Ser121 is subject to Phosphoserine. Tyr127 carries the phosphotyrosine modification. At Thr136 the chain carries Phosphothreonine. Lys137 is subject to N6-acetyllysine; alternate. An N6-succinyllysine; alternate modification is found at Lys137. Ser140 carries the post-translational modification Phosphoserine. Lys143, Lys171, Lys191, and Lys209 each carry N6-acetyllysine; alternate. 4 positions are modified to N6-succinyllysine; alternate: Lys143, Lys171, Lys191, and Lys209. An N6-succinyllysine mark is found at Lys211, Lys212, and Lys214. The CoA site is built by Arg224 and Thr227. Lys234 bears the N6-acetyllysine; alternate mark. Lys234 bears the N6-succinyllysine; alternate mark. Lys240 bears the N6-succinyllysine mark. Lys241 is subject to N6-acetyllysine. Ser251 is a binding site for CoA. An N6-acetyllysine mark is found at Lys269 and Lys270. N6-acetyllysine; alternate is present on Lys305. Lys305 carries the N6-succinyllysine; alternate modification. The residue at position 310 (Ser310) is a Phosphoserine. The residue at position 312 (Lys312) is an N6-acetyllysine; alternate. Lys312 carries the post-translational modification N6-succinyllysine; alternate. A Phosphoserine modification is found at Ser333. N6-acetyllysine is present on residues Lys340 and Lys375. Catalysis depends on Cys382, which acts as the Proton donor/acceptor.

It belongs to the thiolase-like superfamily. Thiolase family. As to quaternary structure, homotetramer. Interacts with BNIP3.

The protein localises to the mitochondrion. The enzyme catalyses an acyl-CoA + acetyl-CoA = a 3-oxoacyl-CoA + CoA. The catalysed reaction is 2 acetyl-CoA = acetoacetyl-CoA + CoA. It catalyses the reaction acetyl-CoA + H2O = acetate + CoA + H(+). It carries out the reaction propanoyl-CoA + H2O = propanoate + CoA + H(+). The enzyme catalyses butanoyl-CoA + H2O = butanoate + CoA + H(+). The catalysed reaction is hexanoyl-CoA + H2O = hexanoate + CoA + H(+). It catalyses the reaction octanoyl-CoA + H2O = octanoate + CoA + H(+). It carries out the reaction decanoyl-CoA + H2O = decanoate + CoA + H(+). The enzyme catalyses dodecanoyl-CoA + H2O = dodecanoate + CoA + H(+). The catalysed reaction is tetradecanoyl-CoA + H2O = tetradecanoate + CoA + H(+). It catalyses the reaction hexadecanoyl-CoA + H2O = hexadecanoate + CoA + H(+). Its pathway is lipid metabolism; fatty acid beta-oxidation. In terms of biological role, in the production of energy from fats, this is one of the enzymes that catalyzes the last step of the mitochondrial beta-oxidation pathway, an aerobic process breaking down fatty acids into acetyl-CoA. Using free coenzyme A/CoA, catalyzes the thiolytic cleavage of medium- to long-chain unbranched 3-oxoacyl-CoAs into acetyl-CoA and a fatty acyl-CoA shortened by two carbon atoms. Also catalyzes the condensation of two acetyl-CoA molecules into acetoacetyl-CoA and could be involved in the production of ketone bodies. Also displays hydrolase activity on various fatty acyl-CoAs. Thereby, could be responsible for the production of acetate in a side reaction to beta-oxidation. Abolishes BNIP3-mediated apoptosis and mitochondrial damage. The protein is 3-ketoacyl-CoA thiolase, mitochondrial (ACAA2) of Pongo abelii (Sumatran orangutan).